We begin with the raw amino-acid sequence, 916 residues long: RNA-directed DNA polymerase from mobile element jockey (916 aa).

The region spanning 483 to 757 (SILRVGYFPK…HEYKYLGVIL (275 aa)) is the Reverse transcriptase domain. A disordered region spans residues 890 to 916 (RSASPRSRVRRRLKRHHPQDLLDRALT). The segment covering 896-906 (SRVRRRLKRHH) has biased composition (basic residues). The span at 907-916 (PQDLLDRALT) shows a compositional bias: basic and acidic residues.

It depends on Mg(2+) as a cofactor. Mn(2+) is required as a cofactor.

It carries out the reaction DNA(n) + a 2'-deoxyribonucleoside 5'-triphosphate = DNA(n+1) + diphosphate. Its activity is regulated as follows. Inactivated by sulphydryl reagent. In Drosophila funebris (Fruit fly), this protein is RNA-directed DNA polymerase from mobile element jockey (jockey\pol).